The chain runs to 459 residues: Tryptophan synthase beta chain (459 aa).

An N6-(pyridoxal phosphate)lysine modification is found at K121.

This sequence belongs to the TrpB family. Tetramer of two alpha and two beta chains. The cofactor is pyridoxal 5'-phosphate.

The catalysed reaction is (1S,2R)-1-C-(indol-3-yl)glycerol 3-phosphate + L-serine = D-glyceraldehyde 3-phosphate + L-tryptophan + H2O. Its pathway is amino-acid biosynthesis; L-tryptophan biosynthesis; L-tryptophan from chorismate: step 5/5. Functionally, the beta subunit is responsible for the synthesis of L-tryptophan from indole and L-serine. In Pyrococcus horikoshii (strain ATCC 700860 / DSM 12428 / JCM 9974 / NBRC 100139 / OT-3), this protein is Tryptophan synthase beta chain (trpB).